Consider the following 250-residue polypeptide: 2,3-bisphosphoglycerate-dependent phosphoglycerate mutase (250 aa).

Substrate is bound by residues 10–17 (RHGESQWN), 23–24 (TG), R62, 89–92 (ERHY), K100, 116–117 (RR), and 185–186 (GN). The active-site Tele-phosphohistidine intermediate is the H11. E89 acts as the Proton donor/acceptor in catalysis.

Belongs to the phosphoglycerate mutase family. BPG-dependent PGAM subfamily. In terms of assembly, homodimer.

It catalyses the reaction (2R)-2-phosphoglycerate = (2R)-3-phosphoglycerate. The protein operates within carbohydrate degradation; glycolysis; pyruvate from D-glyceraldehyde 3-phosphate: step 3/5. Functionally, catalyzes the interconversion of 2-phosphoglycerate and 3-phosphoglycerate. The protein is 2,3-bisphosphoglycerate-dependent phosphoglycerate mutase of Shigella dysenteriae serotype 1 (strain Sd197).